We begin with the raw amino-acid sequence, 235 residues long: Enolase-phosphatase E1 (235 aa).

It belongs to the HAD-like hydrolase superfamily. MasA/MtnC family. In terms of assembly, monomer. Requires Mg(2+) as cofactor.

The catalysed reaction is 5-methylsulfanyl-2,3-dioxopentyl phosphate + H2O = 1,2-dihydroxy-5-(methylsulfanyl)pent-1-en-3-one + phosphate. It participates in amino-acid biosynthesis; L-methionine biosynthesis via salvage pathway; L-methionine from S-methyl-5-thio-alpha-D-ribose 1-phosphate: step 3/6. Its pathway is amino-acid biosynthesis; L-methionine biosynthesis via salvage pathway; L-methionine from S-methyl-5-thio-alpha-D-ribose 1-phosphate: step 4/6. Its function is as follows. Bifunctional enzyme that catalyzes the enolization of 2,3-diketo-5-methylthiopentyl-1-phosphate (DK-MTP-1-P) into the intermediate 2-hydroxy-3-keto-5-methylthiopentenyl-1-phosphate (HK-MTPenyl-1-P), which is then dephosphorylated to form the acireductone 1,2-dihydroxy-3-keto-5-methylthiopentene (DHK-MTPene). The protein is Enolase-phosphatase E1 of Parvibaculum lavamentivorans (strain DS-1 / DSM 13023 / NCIMB 13966).